Here is a 303-residue protein sequence, read N- to C-terminus: Methionyl-tRNA formyltransferase (303 aa).

106 to 109 (SLLP) is a (6S)-5,6,7,8-tetrahydrofolate binding site.

The protein belongs to the Fmt family.

The catalysed reaction is L-methionyl-tRNA(fMet) + (6R)-10-formyltetrahydrofolate = N-formyl-L-methionyl-tRNA(fMet) + (6S)-5,6,7,8-tetrahydrofolate + H(+). Its function is as follows. Attaches a formyl group to the free amino group of methionyl-tRNA(fMet). The formyl group appears to play a dual role in the initiator identity of N-formylmethionyl-tRNA by promoting its recognition by IF2 and preventing the misappropriation of this tRNA by the elongation apparatus. This Thermosipho melanesiensis (strain DSM 12029 / CIP 104789 / BI429) protein is Methionyl-tRNA formyltransferase.